A 1028-amino-acid polypeptide reads, in one-letter code: Contactin-3 (1028 aa).

An N-terminal signal peptide occupies residues 1-19 (MMLSWKQLILLSFIGCLAG). 6 Ig-like C2-type domains span residues 26–117 (PVFV…AKLQ), 122–208 (ENFK…ARVL), 227–313 (PKIE…GRLT), 318–402 (PYWV…AELK), 408–497 (PDFS…LVVT), and 499–593 (PTRI…AELI). 5 disulfides stabilise this stretch: cysteine 50-cysteine 100, cysteine 144-cysteine 196, cysteine 249-cysteine 297, cysteine 339-cysteine 386, and cysteine 431-cysteine 479. 2 N-linked (GlcNAc...) asparagine glycosylation sites follow: asparagine 65 and asparagine 193. N-linked (GlcNAc...) asparagine glycosylation is found at asparagine 377, asparagine 468, asparagine 489, and asparagine 538. Cysteines 521 and 577 form a disulfide. 4 consecutive Fibronectin type-III domains span residues 600-698 (PPEN…TEEA), 703-800 (APSE…SAEE), 805-901 (APSH…TKKT), and 902-998 (PPSQ…TSMD). The interval 684 to 714 (GEPSLPSEKVRTEEAAPEVAPSEVSGGGGSR) is disordered. N-linked (GlcNAc...) asparagine glycosylation is found at asparagine 765, asparagine 860, asparagine 895, asparagine 913, asparagine 931, and asparagine 956. A lipid anchor (GPI-anchor amidated serine) is attached at serine 1002. A propeptide spans 1003–1028 (TSAISDIHPVSGYISVLLFFIVNALW) (removed in mature form).

Belongs to the immunoglobulin superfamily. Contactin family. In terms of assembly, interacts with PTPRG. As to expression, specifically expressed in brain. Not expressed in peripheral tissues such as heart, lung, liver, spleen, kidney and skeletal muscle. In brain, it is restricted to subsets of neurons such as Purkinje cells of the cerebellum, granule cells of the dentate gyrus, and neurons in the superficial layers of the cerebral cortex.

Its subcellular location is the cell membrane. Its function is as follows. Contactins mediate cell surface interactions during nervous system development. Has some neurite outgrowth-promoting activity. This is Contactin-3 (Cntn3) from Rattus norvegicus (Rat).